A 105-amino-acid chain; its full sequence is Circadian clock oscillator protein KaiB1 (105 aa).

This sequence belongs to the KaiB family. As to quaternary structure, homotetramer in solution and crystals formed by 2 dimers. Only elutes as a homotetramer in size exclusion chromatography, interacts with KaiC1 and KaiC3. The KaiABC complex composition changes during the circadian cycle to control KaiC phosphorylation. Complexes KaiC(6), KaiA(2-4):KaiC(6), KaiB(6):KaiC(6) and KaiC(6):KaiB(6):KaiA(12) are among the most important forms, many form cooperatively. Undergoes a major conformational rearrangment; in the free state forms homotetramers as a dimer of dimers. When bound to the CI domain of KaiC switches to a monomeric thioredoxin-fold (KaiB(fs)). KaiB(fs) binds CikA, leading it to dephosphorylate phospho-RpaA.

Key component of the KaiABC oscillator complex, which constitutes the main circadian regulator in cyanobacteria. Complex composition changes during the circadian cycle to control KaiC phosphorylation. KaiA stimulates KaiC autophosphorylation, while KaiB sequesters KaiA, leading to KaiC autodephosphorylation. Phospho-Ser-431 KaiC accumulation triggers binding of KaiB to form the KaiB(6):KaiC(6) complex, leading to changes in output regulators CikA and SasA. KaiB switches to a thioredoxin-like fold (KaiB(fs)) when bound to KaiC. KaiB(6):KaiC(6) formation exposes a site for KaiA binding that sequesters KaiA from KaiC, making the KaiC(6):KaiB(6):KaiA(12) complex that results in KaiC autodephosphorylation. Functionally, component of the oscillator and circadian clock in this organism, enhances fitness in a rhythmic environment. The homotetramer reduces the ATPase activity of KaiC3 by 35%. In terms of biological role, a metamorphic protein which reversibly switches between an inactive tetrameric fold and a rare, thioredoxin-like monomeric fold (KaiB(fs)). KaiB(fs) binds phospho-KaiC, KaiA and CikA. KaiA and CikA compete for binding to KaiB(fs), and KaiB(fs) and SasA compete for binding to KaiC, thus the clock oscillator and output signal pathway are tightly coupled. This Synechocystis sp. (strain ATCC 27184 / PCC 6803 / Kazusa) protein is Circadian clock oscillator protein KaiB1.